We begin with the raw amino-acid sequence, 58 residues long: Large ribosomal subunit protein bL32c (58 aa).

Disordered regions lie at residues 1 to 21 (MAVPKKRTPKSKTRSRKSQWM) and 34 to 58 (LAGRLAARQDQMQPTQMQPTQMQPN). The span at 44–58 (QMQPTQMQPTQMQPN) shows a compositional bias: low complexity.

It belongs to the bacterial ribosomal protein bL32 family.

It localises to the plastid. The protein localises to the chloroplast. The protein is Large ribosomal subunit protein bL32c of Cyanidioschyzon merolae (strain NIES-3377 / 10D) (Unicellular red alga).